The following is a 233-amino-acid chain: Protein Atu3128 (233 aa).

The protein belongs to the glycosyl hydrolase 88 family.

Functionally, seems to regulate the surface properties of the bacterium in the presence of plant cells or plant cell extracts. Mutations in this protein are responsible for an increased aggregation of the bacteria in the presence of pea root cap cells. The chain is Protein Atu3128 from Agrobacterium fabrum (strain C58 / ATCC 33970) (Agrobacterium tumefaciens (strain C58)).